Reading from the N-terminus, the 427-residue chain is Trigger factor (427 aa).

The 86-residue stretch at 163-248 (GDTVVIDFVG…VHEVKAKEVP (86 aa)) folds into the PPIase FKBP-type domain.

The protein belongs to the FKBP-type PPIase family. Tig subfamily.

It is found in the cytoplasm. It catalyses the reaction [protein]-peptidylproline (omega=180) = [protein]-peptidylproline (omega=0). In terms of biological role, involved in protein export. Acts as a chaperone by maintaining the newly synthesized protein in an open conformation. Functions as a peptidyl-prolyl cis-trans isomerase. The protein is Trigger factor of Streptococcus equi subsp. zooepidemicus (strain H70).